The primary structure comprises 479 residues: Ribosomal RNA small subunit methyltransferase F (479 aa).

S-adenosyl-L-methionine-binding positions include 125–131, Glu-149, Asp-176, and Asp-194; that span reads AAAPGSK. The active-site Nucleophile is the Cys-247.

Belongs to the class I-like SAM-binding methyltransferase superfamily. RsmB/NOP family.

Its subcellular location is the cytoplasm. The catalysed reaction is cytidine(1407) in 16S rRNA + S-adenosyl-L-methionine = 5-methylcytidine(1407) in 16S rRNA + S-adenosyl-L-homocysteine + H(+). Specifically methylates the cytosine at position 1407 (m5C1407) of 16S rRNA. The protein is Ribosomal RNA small subunit methyltransferase F of Salmonella enteritidis PT4 (strain P125109).